The sequence spans 1020 residues: Phosphatidylinositol 3-kinase VPS34 (1020 aa).

A C2 PI3K-type domain is found at 49–210; the sequence is LSTKFEDPTV…NWLDKMVLPK (162 aa). A PIK helical domain is found at 331-577; it reads DKELKPTPQL…DGPIKIYMDI (247 aa). The PI3K/PI4K catalytic domain occupies 666 to 1004; the sequence is YPEESSVFKS…LINDSVNAFL (339 aa). Residues 672 to 678 are G-loop; that stretch reads VFKSSLA. Residues 873–881 are catalytic loop; that stretch reads GVGDRHLDN. Residues 892 to 913 form an activation loop region; it reads HADFGYILGRDPKPFPPLMKLP.

This sequence belongs to the PI3/PI4-kinase family. As to quaternary structure, component of the autophagy-specific VPS34 PI3-kinase complex I composed of at least VPS15, VPS30, VPS34, and of the VPS34 PI3-kinase complex II composed of VPS15, VPS30, VPS34 and VPS38. Interacts with VMNA7. Post-translationally, autophosphorylated.

It localises to the golgi apparatus. The protein resides in the trans-Golgi network membrane. It is found in the endosome membrane. It catalyses the reaction a 1,2-diacyl-sn-glycero-3-phospho-(1D-myo-inositol) + ATP = a 1,2-diacyl-sn-glycero-3-phospho-(1D-myo-inositol-3-phosphate) + ADP + H(+). Functionally, multifunctional phosphatidylinositol 3-kinase involved in acidification of vacuoles, pH-dependent cell growth, and autophagocytosis. Plays an important role in protein transport and virulence. Component of the autophagy-specific VPS34 PI3-kinase complex I essential to recruit the ATG8-phosphatidylinositol conjugate and the ATG12-ATG5 conjugate to the pre-autophagosomal structure. Also involved in endosome-to-Golgi retrograde transport as part of the VPS34 PI3-kinase complex II. This second complex is required for the endosome-to-Golgi retrieval of PEP1 and KEX2, and the recruitment of VPS5 and VPS7, two components of the retromer complex, to endosomal membranes (probably through the synthesis of a specific pool of phosphatidylinositol 3-phosphate recruiting the retromer to the endosomes). Finally, it might also be involved in ethanol tolerance and cell wall integrity. This is Phosphatidylinositol 3-kinase VPS34 from Candida albicans (Yeast).